The sequence spans 1614 residues: Adenylate cyclase type 10 (1614 aa).

2 consecutive Guanylate cyclase domains span residues 42 to 179 and 293 to 418; these read VLMF…RLAQ and TIVF…ARMM. 2 residues coordinate Mg(2+): Asp-47 and Ile-48. ATP is bound at residue 47 to 52; the sequence is DISGFT. Hydrogencarbonate is bound at residue Lys-95. A Mg(2+)-binding site is contributed by Asp-99. Asp-99 and Lys-144 together coordinate ATP. Hydrogencarbonate contacts are provided by Val-167, Arg-176, and Met-337. ATP contacts are provided by residues Val-406 and 412-416; that span reads NIAAR.

The protein belongs to the adenylyl cyclase class-4/guanylyl cyclase family. Mg(2+) serves as cofactor. Mn(2+) is required as a cofactor. Expressed in testis.

The protein resides in the cell membrane. It localises to the cytoplasm. It is found in the cytoskeleton. The protein localises to the perinuclear region. Its subcellular location is the nucleus. The protein resides in the cell projection. It localises to the cilium. It is found in the mitochondrion. It carries out the reaction ATP = 3',5'-cyclic AMP + diphosphate. With respect to regulation, activated by manganese or magnesium ions. In the presence of magnesium ions, the enzyme is activated by bicarbonate. Calcium mildly increases the enzyme activity, also in the presence of magnesium ions. Functionally, catalyzes the formation of the signaling molecule cAMP. May function as sensor that mediates responses to changes in cellular bicarbonate and CO(2) levels. Has a critical role in mammalian spermatogenesis by producing the cAMP which regulates cAMP-responsive nuclear factors indispensable for sperm maturation in the epididymis. Induces capacitation, the maturational process that sperm undergo prior to fertilization. Involved in ciliary beat regulation. The sequence is that of Adenylate cyclase type 10 (Adcy10) from Mus musculus (Mouse).